Here is a 117-residue protein sequence, read N- to C-terminus: Putative phosphotransferase enzyme IIB component MG129 (117 aa).

A helical transmembrane segment spans residues 1 to 21 (MKWLLWLGYIFSFGLLYLWIV). The region spanning 42–117 (PFKVKDFVSA…ELKKKIEDEQ (76 aa)) is the PTS EIIB type-1 domain.

The protein localises to the membrane. In terms of biological role, the phosphoenolpyruvate-dependent sugar phosphotransferase system (PTS), a major carbohydrate active -transport system, catalyzes the phosphorylation of incoming sugar substrates concomitant with their translocation across the cell membrane. This chain is Putative phosphotransferase enzyme IIB component MG129, found in Mycoplasma genitalium (strain ATCC 33530 / DSM 19775 / NCTC 10195 / G37) (Mycoplasmoides genitalium).